Here is a 326-residue protein sequence, read N- to C-terminus: Metal-binding protein YtgA (326 aa).

Positions 1–21 are cleaved as a signal peptide; it reads MFFLHVRKYKHVIGGLLCLAG. 4 residues coordinate Fe(2+): H75, H141, H207, and D299.

It belongs to the bacterial solute-binding protein 9 family. Monomer.

The protein resides in the periplasm. Its function is as follows. Part of the ATP-binding cassette (ABC) transport system YtgABCD involved in metal import. Binds Fe(2+), Mn(2+) and Ni(2+), with a preference for Fe(2+) and delivers them to the membrane permease for translocation into the cytoplasm. The polypeptide is Metal-binding protein YtgA (Chlamydia muridarum (strain MoPn / Nigg)).